Reading from the N-terminus, the 169-residue chain is DNA damage-inducible transcript 3 protein (169 aa).

The interval 10–18 (FGTLSSWEL) is interaction with TRIB3. Residues 10-26 (FGTLSSWELEAWYEDLQ) form an N-terminal region. Residues Ser-14, Ser-15, Ser-30, and Ser-31 each carry the phosphoserine; by CK2 modification. A disordered region spans residues 32–139 (DENGGTYVSP…KVAQLAEENE (108 aa)). Residues 74-89 (TSTSQSPHSPDSSQSS) show a composition bias toward low complexity. Residues Ser-79 and Ser-82 each carry the phosphoserine; by MAPK14 modification. Residues 99–162 (QGRTRKRKQS…EATRRALIDR (64 aa)) enclose the bZIP domain. Residues 101–130 (RTRKRKQSGHSPARAGKQRMKEKEQENERK) are basic motif. Residues 119–139 (RMKEKEQENERKVAQLAEENE) are compositionally biased toward basic and acidic residues. A leucine-zipper region spans residues 134–148 (LAEENERLKQEIERL).

This sequence belongs to the bZIP family. As to quaternary structure, heterodimer. Interacts with TCF7L2/TCF4, EP300/P300, HDAC1, HDAC5 and HDAC6. Interacts with TRIB3 which blocks its association with EP300/P300. Interacts with FOXO3, CEBPB and ATF4. In terms of assembly, interacts with isoform AltDDIT3 of DDIT3. Ubiquitinated, leading to its degradation by the proteasome. Post-translationally, phosphorylation at serine residues by MAPK14 enhances its transcriptional activation activity while phosphorylation at serine residues by CK2 inhibits its transcriptional activation activity.

Its subcellular location is the cytoplasm. The protein resides in the nucleus. Functionally, multifunctional transcription factor in endoplasmic reticulum (ER) stress response. Plays an essential role in the response to a wide variety of cell stresses and induces cell cycle arrest and apoptosis in response to ER stress. Plays a dual role both as an inhibitor of CCAAT/enhancer-binding protein (C/EBP) function and as an activator of other genes. Acts as a dominant-negative regulator of C/EBP-induced transcription: dimerizes with members of the C/EBP family, impairs their association with C/EBP binding sites in the promoter regions, and inhibits the expression of C/EBP regulated genes. Positively regulates the transcription of TRIB3, IL6, IL8, IL23, TNFRSF10B/DR5, PPP1R15A/GADD34, BBC3/PUMA, BCL2L11/BIM and ERO1L. Negatively regulates; expression of BCL2 and MYOD1, ATF4-dependent transcriptional activation of asparagine synthetase (ASNS), CEBPA-dependent transcriptional activation of hepcidin (HAMP) and CEBPB-mediated expression of peroxisome proliferator-activated receptor gamma (PPARG). Together with ATF4, mediates ER-mediated cell death by promoting expression of genes involved in cellular amino acid metabolic processes, mRNA translation and the unfolded protein response (UPR) in response to ER stress. Inhibits the canonical Wnt signaling pathway by binding to TCF7L2/TCF4, impairing its DNA-binding properties and repressing its transcriptional activity. Plays a regulatory role in the inflammatory response through the induction of caspase-11 (CASP4/CASP11) which induces the activation of caspase-1 (CASP1) and both these caspases increase the activation of pro-IL1B to mature IL1B which is involved in the inflammatory response. Acts as a major regulator of postnatal neovascularization through regulation of endothelial nitric oxide synthase (NOS3)-related signaling. This chain is DNA damage-inducible transcript 3 protein (DDIT3), found in Homo sapiens (Human).